We begin with the raw amino-acid sequence, 456 residues long: GTPase Der (456 aa).

EngA-type G domains lie at 4-169 (PIVA…PAVE) and 177-352 (IKVA…ESHK). GTP-binding positions include 10 to 17 (GRPNVGKS), 57 to 61 (DTGGL), 120 to 123 (NKCE), 183 to 190 (GRPNVGKS), 230 to 234 (DTAGI), and 295 to 298 (NKWD). The region spanning 353–438 (RRVSTSVINE…PIILLWRSKK (86 aa)) is the KH-like domain.

It belongs to the TRAFAC class TrmE-Era-EngA-EngB-Septin-like GTPase superfamily. EngA (Der) GTPase family. In terms of assembly, associates with the 50S ribosomal subunit.

In terms of biological role, GTPase that plays an essential role in the late steps of ribosome biogenesis. The protein is GTPase Der of Nostoc punctiforme (strain ATCC 29133 / PCC 73102).